The chain runs to 206 residues: Large ribosomal subunit protein uL4 (206 aa).

The disordered stretch occupies residues 63–93 (MYKQKGTGRARHHSARAPQFRGGGKAHGPVV). Residues 64 to 77 (YKQKGTGRARHHSA) show a composition bias toward basic residues.

The protein belongs to the universal ribosomal protein uL4 family. In terms of assembly, part of the 50S ribosomal subunit.

In terms of biological role, one of the primary rRNA binding proteins, this protein initially binds near the 5'-end of the 23S rRNA. It is important during the early stages of 50S assembly. It makes multiple contacts with different domains of the 23S rRNA in the assembled 50S subunit and ribosome. Functionally, forms part of the polypeptide exit tunnel. This chain is Large ribosomal subunit protein uL4, found in Sinorhizobium fredii (strain NBRC 101917 / NGR234).